The sequence spans 264 residues: Putative hydroxypyruvate isomerase (264 aa).

Catalysis depends on proton donor/acceptor residues Glu145 and Glu243.

Belongs to the hyi family.

The enzyme catalyses 3-hydroxypyruvate = 2-hydroxy-3-oxopropanoate. Functionally, catalyzes the reversible isomerization between hydroxypyruvate and 2-hydroxy-3-oxopropanoate (also termed tartronate semialdehyde). This chain is Putative hydroxypyruvate isomerase (Gip), found in Drosophila melanogaster (Fruit fly).